We begin with the raw amino-acid sequence, 370 residues long: Mitogen-activated protein kinase 3 (370 aa).

A Protein kinase domain is found at 32–319 (YVPIKPIGRG…VTEALEHPYM (288 aa)). ATP contacts are provided by residues 38–46 (IGRGAYGIV) and lysine 61. Aspartate 158 (proton acceptor) is an active-site residue. Threonine 191 is subject to Phosphothreonine. Positions 191-193 (TEY) match the TXY motif. Tyrosine 193 carries the phosphotyrosine modification.

The protein belongs to the protein kinase superfamily. CMGC Ser/Thr protein kinase family. MAP kinase subfamily. In terms of processing, dually phosphorylated on Thr-191 and Tyr-193, which activates the enzyme.

It catalyses the reaction L-seryl-[protein] + ATP = O-phospho-L-seryl-[protein] + ADP + H(+). The catalysed reaction is L-threonyl-[protein] + ATP = O-phospho-L-threonyl-[protein] + ADP + H(+). Activated by threonine and tyrosine phosphorylation. This Oryza sativa subsp. japonica (Rice) protein is Mitogen-activated protein kinase 3 (MPK3).